A 490-amino-acid chain; its full sequence is Glutamate--tRNA ligase (490 aa).

The 'HIGH' region signature appears at 12 to 22 (PSPTGTPHVGL). The 'KMSKS' region signature appears at 256 to 260 (KLSKR). Position 259 (Lys-259) interacts with ATP.

The protein belongs to the class-I aminoacyl-tRNA synthetase family. Glutamate--tRNA ligase type 1 subfamily. Monomer.

It is found in the cytoplasm. It catalyses the reaction tRNA(Glu) + L-glutamate + ATP = L-glutamyl-tRNA(Glu) + AMP + diphosphate. Its function is as follows. Catalyzes the attachment of glutamate to tRNA(Glu) in a two-step reaction: glutamate is first activated by ATP to form Glu-AMP and then transferred to the acceptor end of tRNA(Glu). The chain is Glutamate--tRNA ligase from Mycobacterium sp. (strain JLS).